We begin with the raw amino-acid sequence, 103 residues long: Large ribosomal subunit protein bL21 (103 aa).

Belongs to the bacterial ribosomal protein bL21 family. Part of the 50S ribosomal subunit. Contacts protein L20.

Its function is as follows. This protein binds to 23S rRNA in the presence of protein L20. The chain is Large ribosomal subunit protein bL21 from Haemophilus influenzae (strain ATCC 51907 / DSM 11121 / KW20 / Rd).